A 318-amino-acid chain; its full sequence is Cell surface sensor SHO1 (318 aa).

Residues 1 to 23 are disordered; sequence MPSYGSLHSPSLRKMEHSRGQYG. The Cytoplasmic segment spans residues 1-38; the sequence is MPSYGSLHSPSLRKMEHSRGQYGGGRKGMSLGNVIGDP. The chain crosses the membrane as a helical span at residues 39–59; the sequence is FALATISIAGLAWLIAFIASI. The Extracellular portion of the chain corresponds to 60–71; it reads VAQIQTTQGFPT. A helical membrane pass occupies residues 72 to 92; that stretch reads YTWWTVVFYFFLIPGVFVVVA. The Cytoplasmic portion of the chain corresponds to 93 to 100; that stretch reads SDTIQTYH. The helical transmembrane segment at 101 to 121 threads the bilayer; that stretch reads VALVGYMACGLVLTTSSVNGL. Residues 122–130 lie on the Extracellular side of the membrane; sequence VYSTNGAKE. The helical transmembrane segment at 131–151 threads the bilayer; it reads AAAAGFILLSMVTIVWIFYFG. Topologically, residues 152–318 are cytoplasmic; that stretch reads SAPSAMPRAY…IAPSNYLILL (167 aa). The tract at residues 172–255 is disordered; sequence TSNNRQTMTG…AGGAADAEIV (84 aa). Polar residues predominate over residues 190 to 214; that stretch reads ETSTSVQPPQMYTSAQLNGFENPSP. The span at 237–250 shows a compositional bias: low complexity; that stretch reads GLPKTTTPPAGGAA. The SH3 domain maps to 259–318; the sequence is EYPYRAKAIYTYEANPDDANEISFSKHEILEVSDVSGRWWQARKETGETGIAPSNYLILL.

This sequence belongs to the SHO1 family. Forms homooligomers.

It localises to the cell membrane. Its function is as follows. MSB2 and SHO1 have overlapping functions in recognizing various surface signals for MAPK PMK1 activation and appressorium formation. While MSB2 is critical for sensing surface hydrophobicity and cutin monomers, SHO1 may play a more important role in recognizing rice leaf waxes. The chain is Cell surface sensor SHO1 from Pyricularia oryzae (strain 70-15 / ATCC MYA-4617 / FGSC 8958) (Rice blast fungus).